A 409-amino-acid polypeptide reads, in one-letter code: Peptidase T (409 aa).

His78 serves as a coordination point for Zn(2+). Residue Asp80 is part of the active site. A Zn(2+)-binding site is contributed by Asp140. Glu173 acts as the Proton acceptor in catalysis. 3 residues coordinate Zn(2+): Glu174, Asp196, and His379.

Belongs to the peptidase M20B family. Zn(2+) is required as a cofactor.

Its subcellular location is the cytoplasm. It carries out the reaction Release of the N-terminal residue from a tripeptide.. Its function is as follows. Cleaves the N-terminal amino acid of tripeptides. The sequence is that of Peptidase T from Salmonella agona (strain SL483).